The following is a 363-amino-acid chain: Tetraacyldisaccharide 4'-kinase (363 aa).

62–69 (RVGGTGKT) serves as a coordination point for ATP.

Belongs to the LpxK family.

The enzyme catalyses a lipid A disaccharide + ATP = a lipid IVA + ADP + H(+). The protein operates within glycolipid biosynthesis; lipid IV(A) biosynthesis; lipid IV(A) from (3R)-3-hydroxytetradecanoyl-[acyl-carrier-protein] and UDP-N-acetyl-alpha-D-glucosamine: step 6/6. Transfers the gamma-phosphate of ATP to the 4'-position of a tetraacyldisaccharide 1-phosphate intermediate (termed DS-1-P) to form tetraacyldisaccharide 1,4'-bis-phosphate (lipid IVA). The protein is Tetraacyldisaccharide 4'-kinase of Polynucleobacter asymbioticus (strain DSM 18221 / CIP 109841 / QLW-P1DMWA-1) (Polynucleobacter necessarius subsp. asymbioticus).